The sequence spans 384 residues: Sensor protein VanS (384 aa).

Helical transmembrane passes span 21–41 (MYIV…RSMI) and 76–96 (IDIF…RVML). The 216-residue stretch at 161–376 (YLAHDIKTPL…TFRVELPAMP (216 aa)) folds into the Histidine kinase domain. Residue H164 is modified to Phosphohistidine; by autocatalysis. Residues 221 to 384 (QTITLTKTHI…MPDLVDKRRS (164 aa)) form an involved in low-affinity ATP-binding. Exhibits higher affinity for ATP than GTP region.

Post-translationally, autophosphorylated.

The protein resides in the membrane. The catalysed reaction is ATP + protein L-histidine = ADP + protein N-phospho-L-histidine.. Phosphorylation of VanR inhibited by EDTA. Functionally, member of the two-component regulatory system VanS/VanR. Functions as a sensor protein kinase which is autophosphorylated at a histidine residue in response to environmental stimuli, such as glycopeptide antibiotics. VanS transfers its phosphate group to transcriptional regulatory protein VanR, thereby modulating expression of target genes. Binds directly to, and autophosphorylation activity is enhanced by, the glycopeptides vancomycin and teicoplanin, in vitro. However it has also been reported that autophosphorylation, phosphate transfer to VanR and dephosphorylation of phospho-VanR are all unaffected by the presence of vancomycin, in vitro. In the absence of vancomycin, negatively regulates VanR-mediated activation of vanS, vanH, vanA and vanX, probably as a result of dephosphorylating phospho-VanR. May inhibit promoter-specific DNA binding by VanR. Involved in conferring vancomycin resistance. This chain is Sensor protein VanS, found in Enterococcus faecium (Streptococcus faecium).